Reading from the N-terminus, the 476-residue chain is Glycogen synthase (476 aa).

An ADP-alpha-D-glucose-binding site is contributed by lysine 15.

Belongs to the glycosyltransferase 1 family. Bacterial/plant glycogen synthase subfamily.

The catalysed reaction is [(1-&gt;4)-alpha-D-glucosyl](n) + ADP-alpha-D-glucose = [(1-&gt;4)-alpha-D-glucosyl](n+1) + ADP + H(+). It participates in glycan biosynthesis; glycogen biosynthesis. Its function is as follows. Synthesizes alpha-1,4-glucan chains using ADP-glucose. The sequence is that of Glycogen synthase from Bacillus cereus (strain Q1).